Reading from the N-terminus, the 564-residue chain is Acetylcholine receptor subunit alpha-type deg-3 (564 aa).

A signal peptide spans 1-20; the sequence is MTLKIRTIIILFCVISVTTT. Residues 21-268 lie on the Extracellular side of the membrane; sequence SQSLNATLKT…SLVIQRKPLY (248 aa). Residues Asn-25, Asn-37, Asn-125, and Asn-198 are each glycosylated (N-linked (GlcNAc...) asparagine). Intrachain disulfides connect Cys-185/Cys-199 and Cys-248/Cys-249. 3 helical membrane-spanning segments follow: residues 269 to 289, 302 to 319, and 329 to 353; these read YLVNLIIPTSIITLVAITGFF, INLGITTLLAMSILMLMV, and FVPLIAWFYLSIIIIISIGTFLTSV. The Cytoplasmic portion of the chain corresponds to 354 to 526; it reads VLSVQGRRQY…WEFLATVLDR (173 aa). The helical transmembrane segment at 527–547 threads the bilayer; that stretch reads FLLIVFVGAVVIVTAGLILVG.

It belongs to the ligand-gated ion channel (TC 1.A.9) family. Acetylcholine receptor (TC 1.A.9.1) subfamily. In terms of assembly, the functional receptor is a heteromer of deg-3 and des-2. Interacts with ric-3; which is required for proper receptor folding.

The protein resides in the postsynaptic cell membrane. Its subcellular location is the cell membrane. Functionally, subunit of the non-synaptic neuronal acetylcholine receptor, which may play a role in chemotaxis towards choline. After binding choline or acetylcholine, the AChR responds by an extensive change in conformation that affects all subunits and leads to opening of an ion-conducting channel across the plasma membrane. This is Acetylcholine receptor subunit alpha-type deg-3 (deg-3) from Caenorhabditis elegans.